The sequence spans 469 residues: Sulfate adenylyltransferase subunit 1 (469 aa).

Residues lysine 22–glutamate 237 enclose the tr-type G domain. Residues glycine 31–serine 38 are G1. Residue glycine 31–serine 38 coordinates GTP. Positions glycine 89–aspartate 93 are G2. The G3 stretch occupies residues aspartate 110–glycine 113. GTP contacts are provided by residues aspartate 110 to histidine 114 and asparagine 165 to aspartate 168. The tract at residues asparagine 165–aspartate 168 is G4. The tract at residues serine 202 to lysine 204 is G5.

Belongs to the TRAFAC class translation factor GTPase superfamily. Classic translation factor GTPase family. CysN/NodQ subfamily. As to quaternary structure, heterodimer composed of CysD, the smaller subunit, and CysN.

The enzyme catalyses sulfate + ATP + H(+) = adenosine 5'-phosphosulfate + diphosphate. It functions in the pathway sulfur metabolism; hydrogen sulfide biosynthesis; sulfite from sulfate: step 1/3. Its function is as follows. With CysD forms the ATP sulfurylase (ATPS) that catalyzes the adenylation of sulfate producing adenosine 5'-phosphosulfate (APS) and diphosphate, the first enzymatic step in sulfur assimilation pathway. APS synthesis involves the formation of a high-energy phosphoric-sulfuric acid anhydride bond driven by GTP hydrolysis by CysN coupled to ATP hydrolysis by CysD. The sequence is that of Sulfate adenylyltransferase subunit 1 from Methylorubrum extorquens (strain CM4 / NCIMB 13688) (Methylobacterium extorquens).